Reading from the N-terminus, the 185-residue chain is Large ribosomal subunit protein uL5 (185 aa).

This sequence belongs to the universal ribosomal protein uL5 family. In terms of assembly, part of the 50S ribosomal subunit; part of the 5S rRNA/L5/L18/L25 subcomplex. Contacts the 5S rRNA and the P site tRNA. Forms a bridge to the 30S subunit in the 70S ribosome.

In terms of biological role, this is one of the proteins that bind and probably mediate the attachment of the 5S RNA into the large ribosomal subunit, where it forms part of the central protuberance. In the 70S ribosome it contacts protein S13 of the 30S subunit (bridge B1b), connecting the 2 subunits; this bridge is implicated in subunit movement. Contacts the P site tRNA; the 5S rRNA and some of its associated proteins might help stabilize positioning of ribosome-bound tRNAs. The protein is Large ribosomal subunit protein uL5 of Protochlamydia amoebophila (strain UWE25).